Reading from the N-terminus, the 305-residue chain is Imidazoleglycerol-phosphate dehydratase (305 aa).

Belongs to the imidazoleglycerol-phosphate dehydratase family.

The protein resides in the cytoplasm. The enzyme catalyses D-erythro-1-(imidazol-4-yl)glycerol 3-phosphate = 3-(imidazol-4-yl)-2-oxopropyl phosphate + H2O. The protein operates within amino-acid biosynthesis; L-histidine biosynthesis; L-histidine from 5-phospho-alpha-D-ribose 1-diphosphate: step 6/9. In Neisseria meningitidis serogroup C (strain 053442), this protein is Imidazoleglycerol-phosphate dehydratase.